Reading from the N-terminus, the 192-residue chain is Peptide deformylase 1 (192 aa).

Fe cation is bound by residues C101 and H143. E144 is a catalytic residue. H147 is a binding site for Fe cation.

Belongs to the polypeptide deformylase family. Fe(2+) is required as a cofactor.

It carries out the reaction N-terminal N-formyl-L-methionyl-[peptide] + H2O = N-terminal L-methionyl-[peptide] + formate. Functionally, removes the formyl group from the N-terminal Met of newly synthesized proteins. Requires at least a dipeptide for an efficient rate of reaction. N-terminal L-methionine is a prerequisite for activity but the enzyme has broad specificity at other positions. The chain is Peptide deformylase 1 from Prochlorococcus marinus (strain MIT 9313).